Here is a 369-residue protein sequence, read N- to C-terminus: Phosphate acyltransferase (369 aa).

It belongs to the PlsX family. In terms of assembly, homodimer. Probably interacts with PlsY.

The protein localises to the cytoplasm. It carries out the reaction a fatty acyl-[ACP] + phosphate = an acyl phosphate + holo-[ACP]. It participates in lipid metabolism; phospholipid metabolism. Its function is as follows. Catalyzes the reversible formation of acyl-phosphate (acyl-PO(4)) from acyl-[acyl-carrier-protein] (acyl-ACP). This enzyme utilizes acyl-ACP as fatty acyl donor, but not acyl-CoA. The polypeptide is Phosphate acyltransferase (Gluconobacter oxydans (strain 621H) (Gluconobacter suboxydans)).